A 403-amino-acid polypeptide reads, in one-letter code: Arginine biosynthesis bifunctional protein ArgJ (403 aa).

Thr149, Lys175, Thr186, Glu272, Asn398, and Thr403 together coordinate substrate. Catalysis depends on Thr186, which acts as the Nucleophile.

The protein belongs to the ArgJ family. Heterotetramer of two alpha and two beta chains.

Its subcellular location is the cytoplasm. The enzyme catalyses N(2)-acetyl-L-ornithine + L-glutamate = N-acetyl-L-glutamate + L-ornithine. The catalysed reaction is L-glutamate + acetyl-CoA = N-acetyl-L-glutamate + CoA + H(+). It participates in amino-acid biosynthesis; L-arginine biosynthesis; L-ornithine and N-acetyl-L-glutamate from L-glutamate and N(2)-acetyl-L-ornithine (cyclic): step 1/1. Its pathway is amino-acid biosynthesis; L-arginine biosynthesis; N(2)-acetyl-L-ornithine from L-glutamate: step 1/4. Catalyzes two activities which are involved in the cyclic version of arginine biosynthesis: the synthesis of N-acetylglutamate from glutamate and acetyl-CoA as the acetyl donor, and of ornithine by transacetylation between N(2)-acetylornithine and glutamate. The polypeptide is Arginine biosynthesis bifunctional protein ArgJ (Caldanaerobacter subterraneus subsp. tengcongensis (strain DSM 15242 / JCM 11007 / NBRC 100824 / MB4) (Thermoanaerobacter tengcongensis)).